Reading from the N-terminus, the 615-residue chain is Nitrogen permease regulator 2 (615 aa).

Low complexity predominate over residues 143-167 (STTTPSTAGPSSTPNPSSNTTPTHP). Disordered regions lie at residues 143-176 (STTTPSTAGPSSTPNPSSNTTPTHPTSEKDTKDM), 354-398 (SLGS…QNSS), and 527-551 (SATGSRNTAQSGNLKPERPSKVSFE). The residue at position 362 (Ser-362) is a Phosphoserine. Over residues 373-398 (SSSIPSNPDSRTTSFSSTSRVSQNSS) the composition is skewed to low complexity. The segment covering 527–539 (SATGSRNTAQSGN) has biased composition (polar residues).

It belongs to the NPR2 family. As to quaternary structure, component of the SEA complex composed of at least IML1/SEA1, RTC1/SEA2, MTC5/SEA3, NPR2, NPR3, SEA4, SEC13 and SEH1. Forms a heterodimer with NPR3.

It is found in the vacuole membrane. Functionally, component of the SEA complex which coats the vacuolar membrane and is involved in intracellular trafficking, autophagy, response to nitrogen starvation, and amino acid biogenesis. Mediates inactivation of the TORC1 complex in response to amino acid starvation. Post-transcriptional regulator of nitrogen permeases. May be involved in putative NPR1-dependent phosphorylation of nitrogen permeases or in the processing and targeting of nitrogen permeases at the level of the endoplasmic reticulum. In Saccharomyces cerevisiae (strain ATCC 204508 / S288c) (Baker's yeast), this protein is Nitrogen permease regulator 2 (NPR2).